A 229-amino-acid polypeptide reads, in one-letter code: MAASNFFLLTAFIALVATQAMASDPSPLQDFCVADKHSPVRVNGLPCKDAKDVSVDDFFLAANLDKPMDTTKSKAGSNVTLINVMKLAGLNTLSISMARIDYAPKGQNPPHTHPRATEILTVLEGSLYVGFVTSNQANRENKLFTKTLNKGDVFVFPQGLIHFQFNPSYDKPAVAIAALSSQNPGAITIANAVFGSHPPISDDVLAKAFQVDKKAMDWLQAQFWENNHN.

Positions 1–22 (MAASNFFLLTAFIALVATQAMA) are cleaved as a signal peptide. A disulfide bond links C32 and C47. Residues 62 to 217 (ANLDKPMDTT…AFQVDKKAMD (156 aa)) form the Cupin type-1 domain. N-linked (GlcNAc...) asparagine glycosylation occurs at N78. Residues H111, H113, E118, and H162 each contribute to the Mn(2+) site.

The protein belongs to the germin family. Oligomer (believed to be a pentamer but probably hexamer).

Its subcellular location is the secreted. The protein localises to the extracellular space. It is found in the apoplast. In terms of biological role, may play a role in plant defense. Probably has no oxalate oxidase activity even if the active site is conserved. In Oryza sativa subsp. japonica (Rice), this protein is Putative germin-like protein 12-4.